Here is a 178-residue protein sequence, read N- to C-terminus: Large ribosomal subunit protein bL25 (178 aa).

The protein belongs to the bacterial ribosomal protein bL25 family. CTC subfamily. Part of the 50S ribosomal subunit; part of the 5S rRNA/L5/L18/L25 subcomplex. Contacts the 5S rRNA. Binds to the 5S rRNA independently of L5 and L18.

In terms of biological role, this is one of the proteins that binds to the 5S RNA in the ribosome where it forms part of the central protuberance. The sequence is that of Large ribosomal subunit protein bL25 from Sulfurimonas denitrificans (strain ATCC 33889 / DSM 1251) (Thiomicrospira denitrificans (strain ATCC 33889 / DSM 1251)).